Consider the following 327-residue polypeptide: MQFIDQANIILKAGKGGNGIVSFRREKFVPAGGPSGGNGGRGGSVILMADNNLQTLLDFKFKREIIAEDGCKGGPNKRSGASGQDTILKVPCGTEIRDIKTGIILGDLTKDKQSLTIAIGGRGGHGNAYYLSNQNRAPESFTEGKDGEIWEVQLELKLLAEVGIIGLPNAGKSTLISVVSSARPKIANYPFTTLIPNLGVVRKMDGNGCLFADIPGLISGAADGVGLGHDFLRHIQRTKILVHLIDAIAENPLHDFEIIEQELKKYGKGLLDKERIIVLNKMELVDDDYLQIITKKLEDLSKKKVLVISSSLKKGLSSLLSEVWKRI.

One can recognise an Obg domain in the interval 1 to 159 (MQFIDQANII…WEVQLELKLL (159 aa)). In terms of domain architecture, OBG-type G spans 160–327 (AEVGIIGLPN…SLLSEVWKRI (168 aa)). ATP-binding positions include 166–173 (GLPNAGKS), 191–195 (FTTLI), 213–216 (DIPG), 280–283 (NKME), and 309–311 (SSS). Mg(2+) contacts are provided by Ser173 and Thr193.

Belongs to the TRAFAC class OBG-HflX-like GTPase superfamily. OBG GTPase family. Monomer. Requires Mg(2+) as cofactor.

It is found in the cytoplasm. Its function is as follows. An essential GTPase which binds GTP, GDP and possibly (p)ppGpp with moderate affinity, with high nucleotide exchange rates and a fairly low GTP hydrolysis rate. Plays a role in control of the cell cycle, stress response, ribosome biogenesis and in those bacteria that undergo differentiation, in morphogenesis control. This Prochlorococcus marinus (strain MIT 9301) protein is GTPase Obg.